The primary structure comprises 621 residues: UvrABC system protein C (621 aa).

A GIY-YIG domain is found at 13–92; that stretch reads NEPGVYLMKN…IKKYSPKYNI (80 aa). In terms of domain architecture, UVR spans 204–239; it reads RSLLNKLKEEMQSASGNLEFEKAASLRDKMIAIENI.

Belongs to the UvrC family. In terms of assembly, interacts with UvrB in an incision complex.

The protein localises to the cytoplasm. The UvrABC repair system catalyzes the recognition and processing of DNA lesions. UvrC both incises the 5' and 3' sides of the lesion. The N-terminal half is responsible for the 3' incision and the C-terminal half is responsible for the 5' incision. This is UvrABC system protein C from Clostridium beijerinckii (strain ATCC 51743 / NCIMB 8052) (Clostridium acetobutylicum).